Consider the following 278-residue polypeptide: Transmembrane protein 41B (278 aa).

Residues 1 to 31 (MQVHERSHTGGHTCQCNHGSEKKAPATGKVH) are disordered. 6 helical membrane-spanning segments follow: residues 39 to 59 (MSLL…FLVY), 96 to 116 (FYVE…TFAI), 132 to 154 (FPLA…YLLS), 184 to 204 (LINY…FINI), 212 to 232 (PLKV…FVAI), and 249 to 269 (SWNS…PAIF). The tract at residues 127–238 (GFLYPFPLAL…FVAIKAGTTL (112 aa)) is VTT domain; required for its function in autophagy.

This sequence belongs to the TMEM41 family.

Its subcellular location is the endoplasmic reticulum membrane. The protein localises to the endomembrane system. The enzyme catalyses a 1,2-diacyl-sn-glycero-3-phospho-L-serine(in) = a 1,2-diacyl-sn-glycero-3-phospho-L-serine(out). The catalysed reaction is cholesterol(in) = cholesterol(out). It catalyses the reaction a 1,2-diacyl-sn-glycero-3-phosphocholine(in) = a 1,2-diacyl-sn-glycero-3-phosphocholine(out). It carries out the reaction a 1,2-diacyl-sn-glycero-3-phosphoethanolamine(in) = a 1,2-diacyl-sn-glycero-3-phosphoethanolamine(out). Phospholipid scramblase involved in lipid homeostasis and membrane dynamics processes. Has phospholipid scramblase activity toward cholesterol and phosphatidylserine, as well as phosphatidylethanolamine and phosphatidylcholine. Required for autophagosome formation: participates in early stages of autophagosome biogenesis at the endoplasmic reticulum (ER) membrane by reequilibrating the leaflets of the ER as lipids are extracted by atg2 (atg2a or atg2b) to mediate autophagosome assembly. In addition to autophagy, involved in other processes in which phospholipid scramblase activity is required. Required for normal motor neuron development. The protein is Transmembrane protein 41B of Xenopus tropicalis (Western clawed frog).